The sequence spans 133 residues: Glutaredoxin-C4, chloroplastic (133 aa).

The segment covering 1 to 13 (MGMAQSSSSSSRP) has biased composition (low complexity). The disordered stretch occupies residues 1–25 (MGMAQSSSSSSRPSDSEQLEEPSKP). Residues 1 to 27 (MGMAQSSSSSSRPSDSEQLEEPSKPVM) constitute a chloroplast transit peptide. The Glutaredoxin domain maps to 29–129 (LDKAKEIVAS…PLLTEAGAIA (101 aa)). Residues Cys-49 and Cys-52 are joined by a disulfide bond.

Belongs to the glutaredoxin family. CPYC subfamily.

The protein localises to the plastid. The protein resides in the chloroplast. Its function is as follows. Has a glutathione-disulfide oxidoreductase activity in the presence of NADPH and glutathione reductase. Reduces low molecular weight disulfides and proteins. This chain is Glutaredoxin-C4, chloroplastic (GRXC4), found in Oryza sativa subsp. japonica (Rice).